Here is a 213-residue protein sequence, read N- to C-terminus: MSAEILNPNLRRVVLASNNAGKLREFSALFAPLGIELVPQSELGVSEAAEPHATFVENALAKARHASRHTGLPALADDSGLCVVALGGAPGVHSARYAQQPGGARSDAANNALLVRELAAAGDRRAWYVALLALVRTENDPCPLIGEGLWHGEIVDAPAGEHGFGYDPHFYLPQQGCTAAQLAPEHKNRISHRAQALAQLLDKLRATGPVDRP.

17 to 22 (SNNAGK) provides a ligand contact to substrate. D78 acts as the Proton acceptor in catalysis. D78 is a binding site for Mg(2+). Residues S79, 164-167 (FGYD), K187, and 192-193 (HR) each bind substrate.

It belongs to the HAM1 NTPase family. As to quaternary structure, homodimer. Mg(2+) serves as cofactor.

The catalysed reaction is XTP + H2O = XMP + diphosphate + H(+). The enzyme catalyses dITP + H2O = dIMP + diphosphate + H(+). It catalyses the reaction ITP + H2O = IMP + diphosphate + H(+). Functionally, pyrophosphatase that catalyzes the hydrolysis of nucleoside triphosphates to their monophosphate derivatives, with a high preference for the non-canonical purine nucleotides XTP (xanthosine triphosphate), dITP (deoxyinosine triphosphate) and ITP. Seems to function as a house-cleaning enzyme that removes non-canonical purine nucleotides from the nucleotide pool, thus preventing their incorporation into DNA/RNA and avoiding chromosomal lesions. The polypeptide is dITP/XTP pyrophosphatase (Bordetella parapertussis (strain 12822 / ATCC BAA-587 / NCTC 13253)).